The following is a 341-amino-acid chain: MSEYTLQQLADHVGGEVRGNSQLPILRVATLQSATGDAIAFLANSRYKSQLETTSAGAVIVSEKDDSDAIDNAIRVVNPYAAFARIAQLLDTTPKPAHGIAESAKIAPSATIGQNVSIGEYTVIDEGVIIGDNTSIGPHCYIGPETQIGAGCTLWSGVKIYHRCVIGDDCLFHSGSIIGADGFGWAPDNGKWLKIPQLGRVVIKDNVEIGASTTVDRGALDDTVISSGCIIDNQCQIAHNVFIDEDTAIAGCTVLAGSCRIGKRCMIGGASAINGHISVCDDVQIMGFAMVIKEITEPGVYASGIPASGHREWRRNGARFRQLDDLFKRVKELEKQADDNN.

His-239 functions as the Proton acceptor in the catalytic mechanism.

The protein belongs to the transferase hexapeptide repeat family. LpxD subfamily. In terms of assembly, homotrimer.

The catalysed reaction is a UDP-3-O-[(3R)-3-hydroxyacyl]-alpha-D-glucosamine + a (3R)-hydroxyacyl-[ACP] = a UDP-2-N,3-O-bis[(3R)-3-hydroxyacyl]-alpha-D-glucosamine + holo-[ACP] + H(+). It participates in bacterial outer membrane biogenesis; LPS lipid A biosynthesis. Catalyzes the N-acylation of UDP-3-O-acylglucosamine using 3-hydroxyacyl-ACP as the acyl donor. Is involved in the biosynthesis of lipid A, a phosphorylated glycolipid that anchors the lipopolysaccharide to the outer membrane of the cell. This Idiomarina loihiensis (strain ATCC BAA-735 / DSM 15497 / L2-TR) protein is UDP-3-O-acylglucosamine N-acyltransferase.